Here is a 481-residue protein sequence, read N- to C-terminus: Protein hedgehog (481 aa).

A lipid anchor (N-palmitoyl cysteine) is attached at C93. Ca(2+) is bound by residues E157, E158, D163, T193, E194, D197, and D199. G265 is lipidated: Cholesterol glycine ester.

This sequence belongs to the hedgehog family. In terms of assembly, interacts with shf. Post-translationally, the C-terminal part of the hedgehog protein precursor displays an autoproteolysis activity that results in the cleavage of the full-length protein into two parts (N-product and C-product). In addition, the C-terminal part displays a cholesterol transferase activity that results by the covalent attachment of a cholesterol moiety to the C-terminal of the newly generated N-product. The N-product is the active species in both local and long-range signaling, whereas the C-product has no signaling activity. Cholesterylation is required for N-product targeting to lipid rafts and multimerization. In terms of processing, N-palmitoylation by Rasp of the hedgehog N-product, within the secretory pathway, is required for the embryonic and larval patterning activities of the hedgehog signal.

Its subcellular location is the nucleus. The protein resides in the cytoplasm. It localises to the cell membrane. It catalyses the reaction glycyl-L-cysteinyl-[protein] + cholesterol + H(+) = [protein]-C-terminal glycyl cholesterol ester + N-terminal L-cysteinyl-[protein]. The C-terminal part of the hedgehog protein precursor displays an autoproteolysis activity that results in the cleavage of the full-length protein into two parts (N-product and C-product). In addition, the C-terminal part displays a cholesterol transferase activity that results by the covalent attachment of a cholesterol moiety to the C-terminal of the newly generated N-product. Once cleaved, the C-product has no signaling activity and diffuses from the cell. Its function is as follows. The dually lipidated hedgehog protein N-product is a morphogen which is essential for a variety of patterning events during development. Establishes the anterior-posterior axis of the embryonic segments and patterns the larval imaginal disks. Binds to the patched (ptc) receptor, which functions in association with smoothened (smo), to activate the transcription of target genes wingless (wg), decapentaplegic (dpp) and ptc. In the absence of hh, ptc represses the constitutive signaling activity of smo through fused (fu). Essential component of a signaling pathway which regulates the Duox-dependent gut immune response to bacterial uracil; required to activate Cad99C-dependent endosome formation, norpA-dependent Ca2+ mobilization and p38 MAPK, which are essential steps in the Duox-dependent production of reactive oxygen species (ROS) in response to intestinal bacterial infection. During photoreceptor differentiation, it up-regulates transcription of Ubr3, which in turn promotes the hh-signaling pathway by mediating the ubiquitination and degradation of cos. This is Protein hedgehog from Drosophila persimilis (Fruit fly).